A 262-amino-acid polypeptide reads, in one-letter code: tRNA (guanine-N(1)-)-methyltransferase (262 aa).

Residues G112 and 132 to 137 (IGDYIL) contribute to the S-adenosyl-L-methionine site.

It belongs to the RNA methyltransferase TrmD family. As to quaternary structure, homodimer.

The protein localises to the cytoplasm. The enzyme catalyses guanosine(37) in tRNA + S-adenosyl-L-methionine = N(1)-methylguanosine(37) in tRNA + S-adenosyl-L-homocysteine + H(+). In terms of biological role, specifically methylates guanosine-37 in various tRNAs. The protein is tRNA (guanine-N(1)-)-methyltransferase of Desulfatibacillum aliphaticivorans.